The primary structure comprises 240 residues: Biosynthetic peptidoglycan transglycosylase (240 aa).

A helical transmembrane segment spans residues 12–31; that stretch reads ALMWFMVGSVLLVLLLRFVP.

This sequence belongs to the glycosyltransferase 51 family.

It is found in the cell inner membrane. It carries out the reaction [GlcNAc-(1-&gt;4)-Mur2Ac(oyl-L-Ala-gamma-D-Glu-L-Lys-D-Ala-D-Ala)](n)-di-trans,octa-cis-undecaprenyl diphosphate + beta-D-GlcNAc-(1-&gt;4)-Mur2Ac(oyl-L-Ala-gamma-D-Glu-L-Lys-D-Ala-D-Ala)-di-trans,octa-cis-undecaprenyl diphosphate = [GlcNAc-(1-&gt;4)-Mur2Ac(oyl-L-Ala-gamma-D-Glu-L-Lys-D-Ala-D-Ala)](n+1)-di-trans,octa-cis-undecaprenyl diphosphate + di-trans,octa-cis-undecaprenyl diphosphate + H(+). It functions in the pathway cell wall biogenesis; peptidoglycan biosynthesis. Its function is as follows. Peptidoglycan polymerase that catalyzes glycan chain elongation from lipid-linked precursors. This chain is Biosynthetic peptidoglycan transglycosylase, found in Pseudomonas fluorescens (strain ATCC BAA-477 / NRRL B-23932 / Pf-5).